A 780-amino-acid polypeptide reads, in one-letter code: Acetyl-CoA decarbonylase/synthase complex subunit alpha (780 aa).

Residues Cys73, Cys76, Cys77, Cys79, Cys84, and Cys93 each contribute to the [4Fe-4S] cluster site. His116 provides a ligand contact to CO. [Ni-4Fe-4S] cluster contacts are provided by His250, Cys278, and Cys317. 4Fe-4S ferredoxin-type domains are found at residues 399 to 429 (IDEI…MDAV) and 440 to 469 (LEEM…VSMV). The [4Fe-4S] cluster site is built by Cys409, Cys412, Cys415, Cys419, Cys449, Cys452, Cys455, and Cys459. [Ni-4Fe-4S] cluster contacts are provided by Cys517, Cys546, and Cys581.

This sequence belongs to the Ni-containing carbon monoxide dehydrogenase family. As to quaternary structure, heterotetramer of two alpha and two epsilon subunits. The ACDS complex is made up of alpha, epsilon, beta, gamma and delta subunits with a probable stoichiometry of (alpha(2)epsilon(2))(4)-beta(8)-(gamma(1)delta(1))(8). [4Fe-4S] cluster is required as a cofactor. It depends on [Ni-4Fe-4S] cluster as a cofactor.

It catalyses the reaction CO + 2 oxidized [2Fe-2S]-[ferredoxin] + H2O = 2 reduced [2Fe-2S]-[ferredoxin] + CO2 + 2 H(+). Part of the ACDS complex that catalyzes the reversible cleavage of acetyl-CoA, allowing autotrophic growth from CO(2). The alpha-epsilon subcomponent functions as a carbon monoxide dehydrogenase. This chain is Acetyl-CoA decarbonylase/synthase complex subunit alpha, found in Methanothermobacter thermautotrophicus (strain ATCC 29096 / DSM 1053 / JCM 10044 / NBRC 100330 / Delta H) (Methanobacterium thermoautotrophicum).